The sequence spans 316 residues: MSASFPHRHLTGIYGLQPHEILFLLDEAEQWIALNRATSKHDDRLAGLTLINAFFENSTRTLLSFEIAGKRLGADVVNMQVGASSVKKGETLIDTAMTLNAMRADMIVIRHQSSGAVQLIADKVDCPVLNAGDGRHEHPTQALLDALTIRRRKGRIAGLVVAICGDILHSRVARSNILALTTLGAEVRVVAPPTLMPAAIERMGAVPFHDFDAGLDGADVVMMLRLQNERMDGAYLPSPREFHALYGLTPERLERAAPDALVMHPGPMNRGVEITSSVADHPSRSAITEQVEMGVAVRMACLDVLTRRRRGVEGWA.

Residues arginine 60 and threonine 61 each contribute to the carbamoyl phosphate site. Lysine 88 is a binding site for L-aspartate. Residues arginine 110, histidine 138, and glutamine 141 each coordinate carbamoyl phosphate. 2 residues coordinate L-aspartate: arginine 171 and arginine 225. Residues glycine 266 and proline 267 each coordinate carbamoyl phosphate.

Belongs to the aspartate/ornithine carbamoyltransferase superfamily. ATCase family. In terms of assembly, heterododecamer (2C3:3R2) of six catalytic PyrB chains organized as two trimers (C3), and six regulatory PyrI chains organized as three dimers (R2).

It catalyses the reaction carbamoyl phosphate + L-aspartate = N-carbamoyl-L-aspartate + phosphate + H(+). It functions in the pathway pyrimidine metabolism; UMP biosynthesis via de novo pathway; (S)-dihydroorotate from bicarbonate: step 2/3. In terms of biological role, catalyzes the condensation of carbamoyl phosphate and aspartate to form carbamoyl aspartate and inorganic phosphate, the committed step in the de novo pyrimidine nucleotide biosynthesis pathway. The polypeptide is Aspartate carbamoyltransferase catalytic subunit (Rhizorhabdus wittichii (strain DSM 6014 / CCUG 31198 / JCM 15750 / NBRC 105917 / EY 4224 / RW1) (Sphingomonas wittichii)).